We begin with the raw amino-acid sequence, 622 residues long: Elongation factor 4 (622 aa).

Residues 17–201 (ALIRNFCIIA…KVVAEVPAPV (185 aa)) form the tr-type G domain. Residues 29–34 (DHGKST) and 148–151 (NKID) contribute to the GTP site.

It belongs to the TRAFAC class translation factor GTPase superfamily. Classic translation factor GTPase family. LepA subfamily.

It is found in the cell membrane. It catalyses the reaction GTP + H2O = GDP + phosphate + H(+). In terms of biological role, required for accurate and efficient protein synthesis under certain stress conditions. May act as a fidelity factor of the translation reaction, by catalyzing a one-codon backward translocation of tRNAs on improperly translocated ribosomes. Back-translocation proceeds from a post-translocation (POST) complex to a pre-translocation (PRE) complex, thus giving elongation factor G a second chance to translocate the tRNAs correctly. Binds to ribosomes in a GTP-dependent manner. The chain is Elongation factor 4 from Streptomyces avermitilis (strain ATCC 31267 / DSM 46492 / JCM 5070 / NBRC 14893 / NCIMB 12804 / NRRL 8165 / MA-4680).